The primary structure comprises 267 residues: PHD finger protein ALFIN-LIKE 7 (267 aa).

The tract at residues 162–207 (TKVSNGSSKSNKSNPKPSKQSNSNSKPAKPPQPKDEEDSGPEGAED) is disordered. Residues 165-188 (SNGSSKSNKSNPKPSKQSNSNSKP) show a composition bias toward low complexity. A compositionally biased stretch (acidic residues) spans 196-207 (DEEDSGPEGAED). Residues 211-263 (AYMCGACGETYANGEFWICCDVCEKWFHGKCVRITPAKAEHIKQYKCPGCSSK) form a PHD-type zinc finger.

This sequence belongs to the Alfin family. In terms of assembly, interacts with H3K4me3 and to a lesser extent with H3K4me2.

The protein localises to the nucleus. Histone-binding component that specifically recognizes H3 tails trimethylated on 'Lys-4' (H3K4me3), which mark transcription start sites of virtually all active genes. This is PHD finger protein ALFIN-LIKE 7 from Oryza sativa subsp. indica (Rice).